Here is a 407-residue protein sequence, read N- to C-terminus: Lysosomal phospholipase A and acyltransferase (407 aa).

An N-terminal signal peptide occupies residues 1-29; it reads MGCLCLYRSTLLTGGLLFLLMLADPAFPA. D41 serves as a coordination point for substrate. A disulfide bridge links C60 with C84. N-linked (GlcNAc...) asparagine glycosylation occurs at N94. The active-site Acyl-ester intermediate is the S193. S193 is a binding site for Zn(2+). M194 serves as a coordination point for substrate. The N-linked (GlcNAc...) asparagine glycan is linked to N284. Residues D355 and H387 each act as charge relay system in the active site. Residue H387 coordinates Zn(2+). N-linked (GlcNAc...) asparagine glycosylation is present at N393.

The protein belongs to the AB hydrolase superfamily. Lipase family. N-glycosylated. Post-translationally, N-glycosylated. N-glycosylation is important for maturation of the enzyme and normal subcellular location. As to expression, detected in brain (at protein level).

Its subcellular location is the lysosome. The protein localises to the secreted. It is found in the membrane. The catalysed reaction is a 1,2-diacyl-sn-glycero-3-phosphocholine + H2O = a 2-acyl-sn-glycero-3-phosphocholine + a fatty acid + H(+). It carries out the reaction 1-hexadecanoyl-2-(9Z-octadecenoyl)-sn-glycero-3-phosphocholine + H2O = 2-(9Z-octadecenoyl)-sn-glycero-3-phosphocholine + hexadecanoate + H(+). The enzyme catalyses 1,2-di-(9Z-octadecenoyl)-sn-glycero-3-phosphocholine + H2O = 2-(9Z-octadecenoyl)-sn-glycero-3-phosphocholine + (9Z)-octadecenoate + H(+). It catalyses the reaction 1-hexadecanoyl-2-glutaroyl-sn-glycero-3-phosphocholine + H2O = 2-glutaroyl-sn-glycero-3-phosphocholine + hexadecanoate + H(+). The catalysed reaction is 1-hexadecanoyl-2-nonadioyl-sn-glycero-3-phosphocholine + H2O = 2-nonadioyl-sn-glycero-3-phosphocholine + hexadecanoate + H(+). It carries out the reaction 1-hexadecanoyl-2-(5-oxopentanoyl)-sn-glycero-3-phosphocholine + H2O = 2-(5-oxopentanoyl)-sn-glycero-3-phosphocholine + hexadecanoate + H(+). The enzyme catalyses 1-hexadecanoyl-2-(9-oxononanoyl)-sn-glycero-3-phosphocholine + H2O = 2-(9-oxononanoyl)-sn-glycero-3-phosphocholine + hexadecanoate + H(+). It catalyses the reaction 1,2-dihexadecanoyl-sn-glycero-3-phosphocholine + H2O = 2-hexadecanoyl-sn-glycero-3-phosphocholine + hexadecanoate + H(+). The catalysed reaction is a 1,2-diacyl-sn-glycero-3-phosphocholine + H2O = a 1-acyl-sn-glycero-3-phosphocholine + a fatty acid + H(+). It carries out the reaction 1-hexadecanoyl-2-(9Z-octadecenoyl)-sn-glycero-3-phosphocholine + H2O = 1-hexadecanoyl-sn-glycero-3-phosphocholine + (9Z)-octadecenoate + H(+). The enzyme catalyses 1,2-di-(9Z-octadecenoyl)-sn-glycero-3-phosphocholine + H2O = 1-(9Z-octadecenoyl)-sn-glycero-3-phosphocholine + (9Z)-octadecenoate + H(+). It catalyses the reaction 1,2-dihexadecanoyl-sn-glycero-3-phosphocholine + H2O = 1-hexadecanoyl-sn-glycero-3-phosphocholine + hexadecanoate + H(+). The catalysed reaction is a 1-acyl-sn-glycero-3-phosphocholine + H2O = sn-glycerol 3-phosphocholine + a fatty acid + H(+). It carries out the reaction 1-hexadecanoyl-sn-glycero-3-phosphocholine + H2O = sn-glycerol 3-phosphocholine + hexadecanoate + H(+). The enzyme catalyses N-(acetyl)-sphing-4-enine + a 1,2-diacyl-sn-glycero-3-phosphoethanolamine = 1-O-acyl-N-(acetyl)-sphing-4-enine + a 2-acyl-sn-glycero-3-phosphoethanolamine. It catalyses the reaction 1-hexadecanoyl-2-(9Z-octadecenoyl)-sn-glycero-3-phosphoethanolamine + N-(acetyl)-sphing-4-enine = 2-(9Z-octadecenoyl)-sn-glycero-3-phosphoethanolamine + 1-hexadecanoyl-N-(acetyl)-sphing-4-enine. The catalysed reaction is 1-hexadecanoyl-2-(9Z,12Z-octadecadienoyl)-sn-glycero-3-phosphoethanolamine + N-(acetyl)-sphing-4-enine = 2-(9Z,12Z)-octadecadienoyl-sn-glycero-3-phosphoethanolamine + 1-hexadecanoyl-N-(acetyl)-sphing-4-enine. It carries out the reaction 1-hexadecanoyl-2-(5Z,8Z,11Z,14Z-eicosatetraenoyl)-sn-glycero-3-phosphoethanolamine + N-(acetyl)-sphing-4-enine = 2-(5Z,8Z,11Z,14Z)-eicosatetraenoyl-sn-glycero-3-phosphoethanolamine + 1-hexadecanoyl-N-(acetyl)-sphing-4-enine. The enzyme catalyses N-(acetyl)-sphing-4-enine + a 1,2-diacyl-sn-glycero-3-phosphoethanolamine = 1-O-acyl-N-(acetyl)-sphing-4-enine + a 1-acyl-sn-glycero-3-phosphoethanolamine. It catalyses the reaction 1-hexadecanoyl-2-(9Z-octadecenoyl)-sn-glycero-3-phosphoethanolamine + N-(acetyl)-sphing-4-enine = 1-(9Z-octadecenoyl)-N-(acetyl)-sphing-4-enine + 1-hexadecanoyl-sn-glycero-3-phosphoethanolamine. The catalysed reaction is 1-hexadecanoyl-2-(9Z,12Z-octadecadienoyl)-sn-glycero-3-phosphoethanolamine + N-(acetyl)-sphing-4-enine = 1-(9Z,12Z-octadecadienoyl)-N-acetylsphing-4-enine + 1-hexadecanoyl-sn-glycero-3-phosphoethanolamine. It carries out the reaction 1-hexadecanoyl-2-(5Z,8Z,11Z,14Z-eicosatetraenoyl)-sn-glycero-3-phosphoethanolamine + N-(acetyl)-sphing-4-enine = 1-(5Z,8Z,11Z,14Z)-eicosatetraenoyl-N-(acetyl)-sphing-4-enine + 1-hexadecanoyl-sn-glycero-3-phosphoethanolamine. The enzyme catalyses N-(acetyl)-sphing-4-enine + a 1,2-diacyl-sn-glycero-3-phosphocholine = 1-O-acyl-N-(acetyl)-sphing-4-enine + a 2-acyl-sn-glycero-3-phosphocholine. It catalyses the reaction 1-hexadecanoyl-2-(9Z-octadecenoyl)-sn-glycero-3-phosphocholine + N-(acetyl)-sphing-4-enine = 1-hexadecanoyl-N-(acetyl)-sphing-4-enine + 2-(9Z-octadecenoyl)-sn-glycero-3-phosphocholine. The catalysed reaction is 1-hexadecanoyl-2-(9Z,12Z-octadecadienoyl)-sn-glycero-3-phosphocholine + N-(acetyl)-sphing-4-enine = 2-(9Z,12Z-octadecadienoyl)-sn-glycero-3-phosphocholine + 1-hexadecanoyl-N-(acetyl)-sphing-4-enine. It carries out the reaction 1-hexadecanoyl-2-(5Z,8Z,11Z,14Z-eicosatetraenoyl)-sn-glycero-3-phosphocholine + N-(acetyl)-sphing-4-enine = 1-hexadecanoyl-N-(acetyl)-sphing-4-enine + 2-(5Z,8Z,11Z,14Z)-eicosatetraenoyl-sn-glycero-3-phosphocholine. The enzyme catalyses 1-hexadecanoyl-2-(4Z,7Z,10Z,13Z,16Z,19Z-docosahexaenoyl)-sn-glycero-3-phosphocholine + N-(acetyl)-sphing-4-enine = 2-(4Z,7Z,10Z,13Z,16Z,19Z-docosahexaenoyl)-sn-glycero-3-phosphocholine + 1-hexadecanoyl-N-(acetyl)-sphing-4-enine. It catalyses the reaction 1-hexadecanoyl-2-nonadioyl-sn-glycero-3-phosphocholine + N-(acetyl)-sphing-4-enine = 2-nonadioyl-sn-glycero-3-phosphocholine + 1-hexadecanoyl-N-(acetyl)-sphing-4-enine. The catalysed reaction is 1-octadecanoyl-2-(9Z-octadecenoyl)-sn-glycero-3-phosphocholine + N-(acetyl)-sphing-4-enine = 1-octadecanoyl-N-(acetyl)-sphing-4-enine + 2-(9Z-octadecenoyl)-sn-glycero-3-phosphocholine. It carries out the reaction 1-(9Z)-octadecenoyl-2-octadecanoyl-sn-glycero-3-phosphocholine + N-(acetyl)-sphing-4-enine = 2-octadecanoyl-sn-glycero-3-phosphocholine + 1-(9Z-octadecenoyl)-N-(acetyl)-sphing-4-enine. The enzyme catalyses 1-octadecanoyl-2-(5Z,8Z,11Z,14Z-eicosatetraenoyl)-sn-glycero-3-phosphocholine + N-(acetyl)-sphing-4-enine = 1-octadecanoyl-N-(acetyl)-sphing-4-enine + 2-(5Z,8Z,11Z,14Z)-eicosatetraenoyl-sn-glycero-3-phosphocholine. It catalyses the reaction 1-(9Z-octadecenoyl)-2-hexadecanoyl-sn-glycero-3-phosphocholine + N-(acetyl)-sphing-4-enine = 1-(9Z-octadecenoyl)-N-(acetyl)-sphing-4-enine + 2-hexadecanoyl-sn-glycero-3-phosphocholine. The catalysed reaction is N-(acetyl)-sphing-4-enine + a 1,2-diacyl-sn-glycero-3-phosphocholine = 1-O-acyl-N-(acetyl)-sphing-4-enine + a 1-acyl-sn-glycero-3-phosphocholine. It carries out the reaction 1-hexadecanoyl-2-(9Z-octadecenoyl)-sn-glycero-3-phosphocholine + N-(acetyl)-sphing-4-enine = 1-(9Z-octadecenoyl)-N-(acetyl)-sphing-4-enine + 1-hexadecanoyl-sn-glycero-3-phosphocholine. The enzyme catalyses 1-hexadecanoyl-2-(9Z,12Z-octadecadienoyl)-sn-glycero-3-phosphocholine + N-(acetyl)-sphing-4-enine = 1-(9Z,12Z-octadecadienoyl)-N-acetylsphing-4-enine + 1-hexadecanoyl-sn-glycero-3-phosphocholine. It catalyses the reaction 1-hexadecanoyl-2-(5Z,8Z,11Z,14Z-eicosatetraenoyl)-sn-glycero-3-phosphocholine + N-(acetyl)-sphing-4-enine = 1-(5Z,8Z,11Z,14Z)-eicosatetraenoyl-N-(acetyl)-sphing-4-enine + 1-hexadecanoyl-sn-glycero-3-phosphocholine. The catalysed reaction is 1-hexadecanoyl-2-(4Z,7Z,10Z,13Z,16Z,19Z-docosahexaenoyl)-sn-glycero-3-phosphocholine + N-(acetyl)-sphing-4-enine = 1-(4Z,7Z,10Z,13Z,16Z,19Z-docosahexaenoyl)-N-(acetyl)-sphing-4-enine + 1-hexadecanoyl-sn-glycero-3-phosphocholine. It carries out the reaction 1-octadecanoyl-2-(9Z-octadecenoyl)-sn-glycero-3-phosphocholine + N-(acetyl)-sphing-4-enine = 1-(9Z-octadecenoyl)-N-(acetyl)-sphing-4-enine + 1-octadecanoyl-sn-glycero-3-phosphocholine. The enzyme catalyses 1-octadecanoyl-2-(9Z,12Z)-octadecadienoyl-sn-glycero-3-phosphocholine + N-(acetyl)-sphing-4-enine = 1-(9Z,12Z-octadecadienoyl)-N-acetylsphing-4-enine + 1-octadecanoyl-sn-glycero-3-phosphocholine. It catalyses the reaction 1-(9Z-octadecenoyl)-2-hexadecanoyl-sn-glycero-3-phosphocholine + N-(acetyl)-sphing-4-enine = 1-hexadecanoyl-N-(acetyl)-sphing-4-enine + 1-(9Z-octadecenoyl)-sn-glycero-3-phosphocholine. The catalysed reaction is 1-(9Z)-octadecenoyl-2-octadecanoyl-sn-glycero-3-phosphocholine + N-(acetyl)-sphing-4-enine = 1-octadecanoyl-N-(acetyl)-sphing-4-enine + 1-(9Z-octadecenoyl)-sn-glycero-3-phosphocholine. It carries out the reaction 1,2-di-(9Z-octadecenoyl)-sn-glycero-3-phosphocholine + N-(acetyl)-sphing-4-enine = 1-(9Z-octadecenoyl)-N-(acetyl)-sphing-4-enine + 1-(9Z-octadecenoyl)-sn-glycero-3-phosphocholine. The enzyme catalyses 1-octadecanoyl-2-(5Z,8Z,11Z,14Z-eicosatetraenoyl)-sn-glycero-3-phosphocholine + N-(acetyl)-sphing-4-enine = 1-(5Z,8Z,11Z,14Z)-eicosatetraenoyl-N-(acetyl)-sphing-4-enine + 1-octadecanoyl-sn-glycero-3-phosphocholine. It catalyses the reaction a 1,2-diacyl-sn-glycero-3-phospho-L-serine + N-(acetyl)-sphing-4-enine = a 2-acyl-sn-glycero-3-phospho-L-serine + 1-O-acyl-N-(acetyl)-sphing-4-enine. The catalysed reaction is 1-octadecanoyl-2-(9Z-octadecenoyl)-sn-glycero-3-phospho-L-serine + N-(acetyl)-sphing-4-enine = 2-(9Z-octadecenoyl)-sn-glycero-3-phospho-L-serine + 1-octadecanoyl-N-(acetyl)-sphing-4-enine. It carries out the reaction a 1,2-diacyl-sn-glycero-3-phospho-L-serine + N-(acetyl)-sphing-4-enine = 1-O-acyl-N-(acetyl)-sphing-4-enine + a 1-acyl-sn-glycero-3-phospho-L-serine. The enzyme catalyses 1-octadecanoyl-2-(9Z-octadecenoyl)-sn-glycero-3-phospho-L-serine + N-(acetyl)-sphing-4-enine = 1-octadecanoyl-sn-glycero-3-phosphoserine + 1-(9Z-octadecenoyl)-N-(acetyl)-sphing-4-enine. It catalyses the reaction a 1,2-diacyl-sn-glycero-3-phospho-(1'-sn-glycerol) + N-(acetyl)-sphing-4-enine = 2-acyl-sn-glycero-3-phospho-(1'-sn-glycerol) + 1-O-acyl-N-(acetyl)-sphing-4-enine. The catalysed reaction is 1-octadecanoyl-2-(9Z-octadecenoyl)-sn-glycero-3-phospho-(1'-sn-glycerol) + N-(acetyl)-sphing-4-enine = 2-(9Z-octadecenoyl)-sn-glycero-3-phospho-(1'-sn-glycerol) + 1-octadecanoyl-N-(acetyl)-sphing-4-enine. It carries out the reaction a 1,2-diacyl-sn-glycero-3-phospho-(1'-sn-glycerol) + N-(acetyl)-sphing-4-enine = 1-O-acyl-N-(acetyl)-sphing-4-enine + 1-acyl-sn-glycero-3-phospho-(1'-sn-glycerol). The enzyme catalyses 1-octadecanoyl-2-(9Z-octadecenoyl)-sn-glycero-3-phospho-(1'-sn-glycerol) + N-(acetyl)-sphing-4-enine = 1-octadecanoyl-sn-glycero-3-phospho-(1'-sn-glycerol) + 1-(9Z-octadecenoyl)-N-(acetyl)-sphing-4-enine. It catalyses the reaction an N-acylethanolamine + a 1,2-diacyl-sn-glycero-3-phosphocholine = 2-(acylamino)ethyl fatty acid + a 2-acyl-sn-glycero-3-phosphocholine. The catalysed reaction is an N-acylethanolamine + a 1,2-diacyl-sn-glycero-3-phosphocholine = 2-(acylamino)ethyl fatty acid + a 1-acyl-sn-glycero-3-phosphocholine. It carries out the reaction N-(5Z,8Z,11Z,14Z-eicosatetraenoyl)-ethanolamine + 1,2-di-(9Z-octadecenoyl)-sn-glycero-3-phosphocholine = 2-[(5Z,8Z,11Z,14Z)-eicosatetraenoylamino]ethyl (9Z)-octadecenoate + (9Z-octadecenoyl)-sn-glycero-3-phosphocholine. The enzyme catalyses N-(9Z-octadecenoyl) ethanolamine + 1,2-di-(9Z-octadecenoyl)-sn-glycero-3-phosphocholine = 2-[(9Z)-octadecenoylamino]ethyl (9Z)-octadecenoate + (9Z-octadecenoyl)-sn-glycero-3-phosphocholine. It catalyses the reaction a 3-acyl-sn-glycerol + a 1,2-diacyl-sn-glycero-3-phosphocholine = a 1,3-diacylglycerol + a 1-acyl-sn-glycero-3-phosphocholine. The catalysed reaction is a 3-acyl-sn-glycerol + a 1,2-diacyl-sn-glycero-3-phosphocholine = a 1,3-diacylglycerol + a 2-acyl-sn-glycero-3-phosphocholine. It carries out the reaction 3-(9Z-octadecenoyl)-sn-glycerol + 1,2-di-(9Z-octadecenoyl)-sn-glycero-3-phosphocholine = 1,3-di-(9Z-octadecenoyl)-glycerol + (9Z-octadecenoyl)-sn-glycero-3-phosphocholine. The enzyme catalyses 3-hexadecanoyl-sn-glycerol + 1,2-di-(9Z-octadecenoyl)-sn-glycero-3-phosphocholine = 1-(9Z)-octadecenoyl-3-hexadecanoyl-sn-glycerol + (9Z-octadecenoyl)-sn-glycero-3-phosphocholine. It catalyses the reaction a 1-acyl-sn-glycerol + a 1,2-diacyl-sn-glycero-3-phosphocholine = a 1,3-diacylglycerol + a 2-acyl-sn-glycero-3-phosphocholine. The catalysed reaction is a 1-acyl-sn-glycerol + a 1,2-diacyl-sn-glycero-3-phosphocholine = a 1,3-diacylglycerol + a 1-acyl-sn-glycero-3-phosphocholine. It carries out the reaction 1-(9Z-octadecenoyl)-sn-glycerol + 1,2-di-(9Z-octadecenoyl)-sn-glycero-3-phosphocholine = 1,3-di-(9Z-octadecenoyl)-glycerol + (9Z-octadecenoyl)-sn-glycero-3-phosphocholine. The enzyme catalyses 1-hexadecanoyl-sn-glycerol + 1,2-di-(9Z-octadecenoyl)-sn-glycero-3-phosphocholine = 1-hexadecanoyl-3-(9Z)-octadecenoyl-sn-glycerol + (9Z-octadecenoyl)-sn-glycero-3-phosphocholine. It catalyses the reaction a 2-acylglycerol + a 1,2-diacyl-sn-glycero-3-phosphocholine = a 1,2-diacylglycerol + a 2-acyl-sn-glycero-3-phosphocholine. The catalysed reaction is a 2-acylglycerol + a 1,2-diacyl-sn-glycero-3-phosphocholine = a 1,2-diacylglycerol + a 1-acyl-sn-glycero-3-phosphocholine. It carries out the reaction 2-hexadecanoylglycerol + 1,2-di-(9Z-octadecenoyl)-sn-glycero-3-phosphocholine = 1-(9Z)-octadecenoyl-2-hexadecanoylglycerol + (9Z-octadecenoyl)-sn-glycero-3-phosphocholine. The enzyme catalyses 1-O-alkylglycerol + a 1,2-diacyl-sn-glycero-3-phosphocholine = 1-O-alkyl-3-acylglycerol + a 1-acyl-sn-glycero-3-phosphocholine. It catalyses the reaction 1-O-alkylglycerol + a 1,2-diacyl-sn-glycero-3-phosphocholine = 1-O-alkyl-3-acylglycerol + a 2-acyl-sn-glycero-3-phosphocholine. The catalysed reaction is 1-O-hexadecylglycerol + 1,2-di-(9Z-octadecenoyl)-sn-glycero-3-phosphocholine = 1-O-hexadecyl-3-(9Z)-octadecenoylglycerol + (9Z-octadecenoyl)-sn-glycero-3-phosphocholine. It carries out the reaction 1-O-alkyl-2-acyl-sn-glycerol + a 1,2-diacyl-sn-glycero-3-phosphocholine = 1-O-alkyl-2,3-diacyl-sn-glycerol + a 2-acyl-sn-glycero-3-phosphocholine. The enzyme catalyses 1-O-alkyl-2-acyl-sn-glycerol + a 1,2-diacyl-sn-glycero-3-phosphocholine = 1-O-alkyl-2,3-diacyl-sn-glycerol + a 1-acyl-sn-glycero-3-phosphocholine. It catalyses the reaction 1-O-hexadecyl-2-acetyl-sn-glycerol + 1,2-di-(9Z-octadecenoyl)-sn-glycero-3-phosphocholine = 1-O-hexadecyl-2-acetyl-3-(9Z)-octadecenoyl-sn-glycerol + (9Z-octadecenoyl)-sn-glycero-3-phosphocholine. The catalysed reaction is 1-O-hexadecyl-2-O-methyl-sn-glycerol + 1,2-di-(9Z-octadecenoyl)-sn-glycero-3-phosphocholine = 1-O-hexadecyl-2-O-methyl-3-(9Z)-octadecenoyl-sn-glycerol + (9Z-octadecenoyl)-sn-glycero-3-phosphocholine. It carries out the reaction a 1,2-diacyl-sn-glycero-3-phosphoethanolamine + H2O = a 1-acyl-sn-glycero-3-phosphoethanolamine + a fatty acid + H(+). The enzyme catalyses 1-acyl-2-(5Z,8Z,11Z,14Z)-eicosatetraenoyl-sn-glycero-3-phosphoethanolamine + H2O = a 1-acyl-sn-glycero-3-phosphoethanolamine + (5Z,8Z,11Z,14Z)-eicosatetraenoate + H(+). It catalyses the reaction a 1,2-diacyl-sn-glycero-3-phospho-(1'-sn-glycerol) + H2O = 1-acyl-sn-glycero-3-phospho-(1'-sn-glycerol) + a fatty acid + H(+). The catalysed reaction is 1-hexadecanoyl-2-(9Z-octadecenoyl)-sn-glycero-3-phospho-(1'-sn-glycerol) + H2O = 1-hexadecanoyl-sn-glycero-3-phospho-(1'-sn-glycerol) + (9Z)-octadecenoate + H(+). It carries out the reaction a 1,2-diacyl-sn-glycero-3-phospho-(1'-sn-glycerol) + H2O = 2-acyl-sn-glycero-3-phospho-(1'-sn-glycerol) + a fatty acid + H(+). The enzyme catalyses 1-hexadecanoyl-2-(9Z-octadecenoyl)-sn-glycero-3-phospho-(1'-sn-glycerol) + H2O = 2-(9Z-octadecenoyl)-sn-glycero-3-phospho-(1'-sn-glycerol) + hexadecanoate + H(+). With respect to regulation, transacylase activity is completely inhibited by Triton X-100 and partially inhibited by heparin. Moderately activated by Mg(2+) and Ca(2+). Its function is as follows. Has dual calcium-independent phospholipase and O-acyltransferase activities with a potential role in glycerophospholipid homeostasis and remodeling of acyl groups of lipophilic alcohols present in acidic cellular compartments. Catalyzes hydrolysis of the ester bond of the fatty acyl group attached at sn-1 or sn-2 position of phospholipids (phospholipase A1 or A2 activity) and transfer it to the hydroxyl group at the first carbon of lipophilic alcohols (O-acyltransferase activity). Among preferred fatty acyl donors are phosphatidylcholines, phosphatidylethanolamines, phosphatidylglycerols and phosphatidylserines. Favors sn-2 over sn-1 deacylation of unsaturated fatty acyl groups of phosphatidylcholines, phosphatidylethanolamines, and phosphatidylglycerols. Among preferred fatty acyl acceptors are natural lipophilic alcohols including short-chain ceramide N-acetyl-sphingosine (C2 ceramide), alkylacylglycerols, monoacylglycerols, and acylethanolamides such as anandamide and oleoylethanolamide. Selectively hydrolyzes the sn-1 fatty acyl group of truncated oxidized phospholipids and may play a role in detoxification of reactive oxidized phospholipids during oxidative stress. Required for normal phospholipid degradation in alveolar macrophages with potential implications in the clearance of pulmonary surfactant, which is mainly composed of dipalmitoylphosphatidylcholine (1,2-dihexadecanoyl-sn-glycero-3-phosphocholine). Involved in the first step of bis(monoacylglycero)phosphate (BMP) de novo synthesis from phosphatidylglycerol (1,2-diacyl-sn-glycero-3-phospho-(1'-sn-glycerol), PG). BMP is an important player in cargo sorting and degradation, regulation of cellular cholesterol levels and intercellular communication. At neutral pH, hydrolyzes the sn-1 fatty acyl group of the lysophosphatidylcholines. The sequence is that of Lysosomal phospholipase A and acyltransferase (PLA2G15) from Bos taurus (Bovine).